We begin with the raw amino-acid sequence, 235 residues long: Cytidylate kinase (235 aa).

16–24 is an ATP binding site; that stretch reads GPAASGKST.

This sequence belongs to the cytidylate kinase family. Type 1 subfamily.

It is found in the cytoplasm. The enzyme catalyses CMP + ATP = CDP + ADP. It catalyses the reaction dCMP + ATP = dCDP + ADP. The polypeptide is Cytidylate kinase (Chloroherpeton thalassium (strain ATCC 35110 / GB-78)).